A 463-amino-acid polypeptide reads, in one-letter code: UDP-N-acetylmuramoylalanine--D-glutamate ligase (463 aa).

Residue 116–122 participates in ATP binding; sequence GTNGKTT.

The protein belongs to the MurCDEF family.

It localises to the cytoplasm. The enzyme catalyses UDP-N-acetyl-alpha-D-muramoyl-L-alanine + D-glutamate + ATP = UDP-N-acetyl-alpha-D-muramoyl-L-alanyl-D-glutamate + ADP + phosphate + H(+). The protein operates within cell wall biogenesis; peptidoglycan biosynthesis. In terms of biological role, cell wall formation. Catalyzes the addition of glutamate to the nucleotide precursor UDP-N-acetylmuramoyl-L-alanine (UMA). The polypeptide is UDP-N-acetylmuramoylalanine--D-glutamate ligase (Synechococcus elongatus (strain ATCC 33912 / PCC 7942 / FACHB-805) (Anacystis nidulans R2)).